The sequence spans 339 residues: Tetraacyldisaccharide 4'-kinase (339 aa).

An ATP-binding site is contributed by 58 to 65 (NVGGVGKT).

Belongs to the LpxK family.

It catalyses the reaction a lipid A disaccharide + ATP = a lipid IVA + ADP + H(+). The protein operates within glycolipid biosynthesis; lipid IV(A) biosynthesis; lipid IV(A) from (3R)-3-hydroxytetradecanoyl-[acyl-carrier-protein] and UDP-N-acetyl-alpha-D-glucosamine: step 6/6. Transfers the gamma-phosphate of ATP to the 4'-position of a tetraacyldisaccharide 1-phosphate intermediate (termed DS-1-P) to form tetraacyldisaccharide 1,4'-bis-phosphate (lipid IVA). This chain is Tetraacyldisaccharide 4'-kinase, found in Chromobacterium violaceum (strain ATCC 12472 / DSM 30191 / JCM 1249 / CCUG 213 / NBRC 12614 / NCIMB 9131 / NCTC 9757 / MK).